A 548-amino-acid polypeptide reads, in one-letter code: T-complex protein 1 subunit alpha (548 aa).

It belongs to the TCP-1 chaperonin family. As to quaternary structure, heterooligomeric complex of about 850 to 900 kDa that forms two stacked rings, 12 to 16 nm in diameter.

The protein resides in the cytoplasm. In terms of biological role, molecular chaperone; assists the folding of proteins upon ATP hydrolysis. Known to play a role, in vitro, in the folding of actin and tubulin. The chain is T-complex protein 1 subunit alpha (tcp1) from Dictyostelium discoideum (Social amoeba).